A 455-amino-acid polypeptide reads, in one-letter code: Anaerobic glycerol-3-phosphate dehydrogenase subunit B (455 aa).

This sequence belongs to the anaerobic G-3-P dehydrogenase subunit B family. Composed of a catalytic GlpA/B dimer and of membrane bound GlpC. The cofactor is FMN.

The enzyme catalyses a quinone + sn-glycerol 3-phosphate = dihydroxyacetone phosphate + a quinol. The protein operates within polyol metabolism; glycerol degradation via glycerol kinase pathway; glycerone phosphate from sn-glycerol 3-phosphate (anaerobic route): step 1/1. Functionally, conversion of glycerol 3-phosphate to dihydroxyacetone. Uses fumarate or nitrate as electron acceptor. The chain is Anaerobic glycerol-3-phosphate dehydrogenase subunit B from Aliivibrio fischeri (strain MJ11) (Vibrio fischeri).